Reading from the N-terminus, the 162-residue chain is Cyclic pyranopterin monophosphate synthase (162 aa).

Substrate-binding positions include 75–77 (LCH) and 113–114 (ME). D128 is a catalytic residue.

Belongs to the MoaC family. In terms of assembly, homohexamer; trimer of dimers.

The enzyme catalyses (8S)-3',8-cyclo-7,8-dihydroguanosine 5'-triphosphate = cyclic pyranopterin phosphate + diphosphate. It functions in the pathway cofactor biosynthesis; molybdopterin biosynthesis. Functionally, catalyzes the conversion of (8S)-3',8-cyclo-7,8-dihydroguanosine 5'-triphosphate to cyclic pyranopterin monophosphate (cPMP). The chain is Cyclic pyranopterin monophosphate synthase from Burkholderia ambifaria (strain ATCC BAA-244 / DSM 16087 / CCUG 44356 / LMG 19182 / AMMD) (Burkholderia cepacia (strain AMMD)).